A 95-amino-acid polypeptide reads, in one-letter code: Endoribonuclease VapD homolog (95 aa).

The protein belongs to the VapD ribonuclease family. Homodimer.

In terms of biological role, cleaves ssRNA, mostly between U:A. This chain is Endoribonuclease VapD homolog, found in Helicobacter pylori (strain ATCC 700392 / 26695) (Campylobacter pylori).